We begin with the raw amino-acid sequence, 355 residues long: RNA 3'-terminal phosphate cyclase (355 aa).

Residues Gln-100 and 300 to 304 (HLADQ) each bind ATP. Catalysis depends on His-325, which acts as the Tele-AMP-histidine intermediate.

The protein belongs to the RNA 3'-terminal cyclase family. Type 1 subfamily.

It is found in the cytoplasm. It catalyses the reaction a 3'-end 3'-phospho-ribonucleotide-RNA + ATP = a 3'-end 2',3'-cyclophospho-ribonucleotide-RNA + AMP + diphosphate. In terms of biological role, catalyzes the conversion of 3'-phosphate to a 2',3'-cyclic phosphodiester at the end of RNA. The mechanism of action of the enzyme occurs in 3 steps: (A) adenylation of the enzyme by ATP; (B) transfer of adenylate to an RNA-N3'P to produce RNA-N3'PP5'A; (C) and attack of the adjacent 2'-hydroxyl on the 3'-phosphorus in the diester linkage to produce the cyclic end product. The biological role of this enzyme is unknown but it is likely to function in some aspects of cellular RNA processing. The protein is RNA 3'-terminal phosphate cyclase of Methanosarcina acetivorans (strain ATCC 35395 / DSM 2834 / JCM 12185 / C2A).